A 106-amino-acid chain; its full sequence is ATP-dependent Clp protease adapter protein ClpS (106 aa).

Residues 1–14 (MTDKAGDWQEHGPQ) are compositionally biased toward basic and acidic residues. The segment at 1–21 (MTDKAGDWQEHGPQVEEAPPQ) is disordered.

The protein belongs to the ClpS family. As to quaternary structure, binds to the N-terminal domain of the chaperone ClpA.

In terms of biological role, involved in the modulation of the specificity of the ClpAP-mediated ATP-dependent protein degradation. The chain is ATP-dependent Clp protease adapter protein ClpS from Alkalilimnicola ehrlichii (strain ATCC BAA-1101 / DSM 17681 / MLHE-1).